The sequence spans 234 residues: Thrombin-like enzyme ancrod (234 aa).

One can recognise a Peptidase S1 domain in the interval 1 to 227 (VIGGDECNIN…YRDWVNNVIA (227 aa)). Disulfide bonds link C7/C141, C28/C44, C78/C232, C120/C188, C152/C167, and C178/C203. N-linked (GlcNAc...) asparagine glycosylation is present at N23. The Charge relay system role is filled by H43. The N-linked (GlcNAc...) asparagine glycan is linked to N79. D88 acts as the Charge relay system in catalysis. N-linked (GlcNAc...) asparagine glycosylation is found at N99 and N148. Catalysis depends on S182, which acts as the Charge relay system. N229 carries an N-linked (GlcNAc...) asparagine glycan.

This sequence belongs to the peptidase S1 family. Snake venom subfamily. As to quaternary structure, monomer. As to expression, expressed by the venom gland.

Its subcellular location is the secreted. The catalysed reaction is Selective cleavage of Arg-|-Xaa bond in fibrinogen, to form fibrin, and release fibrinopeptide A. The specificity of further degradation of fibrinogen varies with species origin of the enzyme.. In terms of biological role, thrombin-like snake venom serine protease that acts as an anticoagulant. It cleaves fibrinogen (FGA) to split off the A-fibrinopeptides (A, AY and AP), but not the B-fibrinopeptide. The resulting fibrin polymers are imperfectly formed and much smaller in size (1 to 2 um long) than the fibrin polymers produced by the action of thrombin. These ancrod-induced microthrombi are friable, unstable, urea-soluble and have significantly degraded alpha chains. They do not cross-link to form thrombi. They are markedly susceptible to digestion by plasmin and are rapidly removed from circulation by either reticuloendothelial phagocytosis or normal fibrinolysis, or both. Anticoagulation through the removal of fibrinogen from the blood is rapid, occurring within hours following its administration. It does not activate plasminogen and does not degrade preformed, fully cross-linked thrombin fibrin. It also reduces the level of plasminogen activator inhibitor (PAI) and may stimulate the release of tissue plasminogen activator (PLAT) from the endothelium. The profibrinolytic effect of these 2 actions appears to be limited to local microthrombus degradation. This is Thrombin-like enzyme ancrod from Calloselasma rhodostoma (Malayan pit viper).